Reading from the N-terminus, the 149-residue chain is MQKLAVKIKKLENFHGDLPQYQSLGASGFDVRAQLAGPVVLNPGERAMIPTGLSFEIPLGYEIQARPRSGWAAKSGLTVLNTPGTIDADYRGEVKIIVINLGNEAVTINDQERCAQLVLAPVIQAQFELVNELSDTERGAGGFGSTGRA.

Substrate contacts are provided by residues 68–70, asparagine 81, 85–87, and lysine 95; these read RSG and TID.

Belongs to the dUTPase family. Mg(2+) serves as cofactor.

It catalyses the reaction dUTP + H2O = dUMP + diphosphate + H(+). The protein operates within pyrimidine metabolism; dUMP biosynthesis; dUMP from dCTP (dUTP route): step 2/2. In terms of biological role, this enzyme is involved in nucleotide metabolism: it produces dUMP, the immediate precursor of thymidine nucleotides and it decreases the intracellular concentration of dUTP so that uracil cannot be incorporated into DNA. This is Deoxyuridine 5'-triphosphate nucleotidohydrolase from Bdellovibrio bacteriovorus (strain ATCC 15356 / DSM 50701 / NCIMB 9529 / HD100).